A 185-amino-acid chain; its full sequence is Ribosome-recycling factor (185 aa).

The interval 138 to 185 (ALKKQEKDGEITEDEERRLEKEVQKVTDESTKKIDQMADNKRKEIIQG) is disordered.

The protein belongs to the RRF family.

Its subcellular location is the cytoplasm. Its function is as follows. Responsible for the release of ribosomes from messenger RNA at the termination of protein biosynthesis. May increase the efficiency of translation by recycling ribosomes from one round of translation to another. This chain is Ribosome-recycling factor, found in Lactobacillus delbrueckii subsp. bulgaricus (strain ATCC BAA-365 / Lb-18).